Here is a 955-residue protein sequence, read N- to C-terminus: uncharacterized protein (955 aa).

Positions 1-24 are cleaved as a signal peptide; sequence MQSSLIKILGVLAIVATLVCFVFA. Residues 127–146 form a disordered region; that stretch reads STRPGKSNLDDNGKMIPIPR. A run of 6 helical transmembrane segments spans residues 597 to 617, 707 to 727, 739 to 759, 781 to 801, 818 to 838, and 857 to 877; these read IKAL…LGFA, LGLS…IVII, AFMA…FLLF, VVLM…LDFV, FIGT…INWF, and IVAL…SGNM. Residues 905 to 955 form a disordered region; it reads LSQVGMDEKTRKGITGRAKERLKQRNETLKQAEKTRKNAPKEEPPKAEIPK. Over residues 910-955 the composition is skewed to basic and acidic residues; it reads MDEKTRKGITGRAKERLKQRNETLKQAEKTRKNAPKEEPPKAEIPK.

This sequence belongs to the TrbL/VirB6 family.

It is found in the cell membrane. This is an uncharacterized protein from Rickettsia bellii (strain RML369-C).